The sequence spans 355 residues: Glutamyl aminopeptidase (355 aa).

A divalent metal cation contacts are provided by H65 and D181. Catalysis depends on E213, which acts as the Proton acceptor. The a divalent metal cation site is built by E214, D236, and H319.

Belongs to the peptidase M42 family. A divalent metal cation serves as cofactor.

It catalyses the reaction Release of N-terminal glutamate (and to a lesser extent aspartate) from a peptide.. The sequence is that of Glutamyl aminopeptidase (pepA) from Lactococcus lactis subsp. cremoris (strain MG1363).